The chain runs to 123 residues: MTGTGRTVTRVDLCEAVYQKVGLSRTESSAFVELVLKEITDCLEKGETVKLSSFGSFLVRQKGQRIGRNPKTGTEVPISPRRVMVFKPSAILKQRINANGSAPSMSSSASAVDDDKSESASRT.

Positions 97–123 (NANGSAPSMSSSASAVDDDKSESASRT) are disordered. Residues 98 to 111 (ANGSAPSMSSSASA) show a composition bias toward low complexity. Residues 113–123 (DDDKSESASRT) are compositionally biased toward basic and acidic residues.

The protein belongs to the bacterial histone-like protein family. As to quaternary structure, heterodimer of an alpha and a beta chain.

Functionally, this protein is one of the two subunits of integration host factor, a specific DNA-binding protein that functions in genetic recombination as well as in transcriptional and translational control. The polypeptide is Integration host factor subunit alpha (Rhodopseudomonas palustris (strain BisB5)).